A 131-amino-acid polypeptide reads, in one-letter code: Small ribosomal subunit protein bS6 (131 aa).

The segment at valine 96–glutamate 131 is disordered. Basic and acidic residues predominate over residues lysine 104–aspartate 122.

It belongs to the bacterial ribosomal protein bS6 family.

Its function is as follows. Binds together with bS18 to 16S ribosomal RNA. The chain is Small ribosomal subunit protein bS6 from Shewanella sp. (strain MR-4).